A 329-amino-acid chain; its full sequence is Alpha/beta hydrolase domain-containing protein 17C (329 aa).

Residues 53-79 (GASAPAPAQATAAAAAAQPAPQQPEEG) are compositionally biased toward low complexity. The segment at 53–85 (GASAPAPAQATAAAAAAQPAPQQPEEGAGAGPG) is disordered. Active-site charge relay system residues include Ser-211, Asp-276, and His-305.

Belongs to the AB hydrolase superfamily. ABHD17 family. Palmitoylated on cysteine residues located in a cysteine cluster at the N-terminus which promotes membrane localization. Palmitoylation is required for post-synaptic localization and for depalmitoylating activity towards DLG4/PSD95.

Its subcellular location is the recycling endosome membrane. The protein resides in the cell projection. It is found in the dendritic spine. It localises to the postsynaptic density membrane. It catalyses the reaction S-hexadecanoyl-L-cysteinyl-[protein] + H2O = L-cysteinyl-[protein] + hexadecanoate + H(+). Inhibited by palmostatin-B. Hydrolyzes fatty acids from S-acylated cysteine residues in proteins. Has depalmitoylating activity towards NRAS and DLG4/PSD95. This Homo sapiens (Human) protein is Alpha/beta hydrolase domain-containing protein 17C.